Consider the following 272-residue polypeptide: Dermonecrotic toxin LvSicTox-alphaIC1bv (272 aa).

Residue histidine 5 is part of the active site. Mg(2+) contacts are provided by glutamate 25 and aspartate 27. The active-site Nucleophile is histidine 41. Cystine bridges form between cysteine 45–cysteine 51 and cysteine 47–cysteine 189. Aspartate 84 contacts Mg(2+).

Belongs to the arthropod phospholipase D family. Class II subfamily. It depends on Mg(2+) as a cofactor. As to expression, expressed by the venom gland.

The protein localises to the secreted. It catalyses the reaction an N-(acyl)-sphingosylphosphocholine = an N-(acyl)-sphingosyl-1,3-cyclic phosphate + choline. The catalysed reaction is an N-(acyl)-sphingosylphosphoethanolamine = an N-(acyl)-sphingosyl-1,3-cyclic phosphate + ethanolamine. It carries out the reaction a 1-acyl-sn-glycero-3-phosphocholine = a 1-acyl-sn-glycero-2,3-cyclic phosphate + choline. The enzyme catalyses a 1-acyl-sn-glycero-3-phosphoethanolamine = a 1-acyl-sn-glycero-2,3-cyclic phosphate + ethanolamine. In terms of biological role, dermonecrotic toxins cleave the phosphodiester linkage between the phosphate and headgroup of certain phospholipids (sphingolipid and lysolipid substrates), forming an alcohol (often choline) and a cyclic phosphate. This toxin acts on sphingomyelin (SM). It may also act on ceramide phosphoethanolamine (CPE), lysophosphatidylcholine (LPC) and lysophosphatidylethanolamine (LPE), but not on lysophosphatidylserine (LPS), and lysophosphatidylglycerol (LPG). It acts by transphosphatidylation, releasing exclusively cyclic phosphate products as second products. Induces dermonecrosis, hemolysis, increased vascular permeability, edema, inflammatory response, and platelet aggregation. This Loxosceles variegata (Recluse spider) protein is Dermonecrotic toxin LvSicTox-alphaIC1bv.